The primary structure comprises 381 residues: Cytochrome b (381 aa).

4 consecutive transmembrane segments (helical) span residues 33-53, 77-98, 113-133, and 178-198; these read FGSL…FLAM, WLIR…FLHV, WNIG…GYVL, and FFAF…VHLL. Residues His-83 and His-97 each contribute to the heme b site. Positions 182 and 196 each coordinate heme b. His-201 is a binding site for a ubiquinone. A run of 4 helical transmembrane segments spans residues 226–246, 288–308, 320–340, and 347–367; these read IKDA…ALFS, LGGV…PLLH, VSQT…WIGG, and FIII…VLMP.

The protein belongs to the cytochrome b family. As to quaternary structure, the cytochrome bc1 complex contains 11 subunits: 3 respiratory subunits (MT-CYB, CYC1 and UQCRFS1), 2 core proteins (UQCRC1 and UQCRC2) and 6 low-molecular weight proteins (UQCRH/QCR6, UQCRB/QCR7, UQCRQ/QCR8, UQCR10/QCR9, UQCR11/QCR10 and a cleavage product of UQCRFS1). This cytochrome bc1 complex then forms a dimer. Requires heme b as cofactor.

The protein resides in the mitochondrion inner membrane. In terms of biological role, component of the ubiquinol-cytochrome c reductase complex (complex III or cytochrome b-c1 complex) that is part of the mitochondrial respiratory chain. The b-c1 complex mediates electron transfer from ubiquinol to cytochrome c. Contributes to the generation of a proton gradient across the mitochondrial membrane that is then used for ATP synthesis. The polypeptide is Cytochrome b (MT-CYB) (Ningaui yvonnae (Southern ningaui)).